Here is a 424-residue protein sequence, read N- to C-terminus: Catabolic NAD-specific glutamate dehydrogenase RocG (424 aa).

Substrate is bound by residues Lys80 and Lys104. The active-site Proton donor is Lys116. Residues Thr200 and Asn231 each contribute to the NAD(+) site. Ser358 provides a ligand contact to substrate.

This sequence belongs to the Glu/Leu/Phe/Val dehydrogenases family. In terms of assembly, homohexamer. Interacts with transcriptional regulator GltC.

It catalyses the reaction L-glutamate + NAD(+) + H2O = 2-oxoglutarate + NH4(+) + NADH + H(+). Devoted to catabolic function of glutamate (and other amino acids of the glutamate family) utilization as sole nitrogen source. It is not involved in anabolic function of glutamate biosynthesis since B.subtilis possesses only one route of glutamate biosynthesis from ammonia, catalyzed by glutamate synthase. Wild-type cells are unable to utilize glutamate or glutamine as a sole carbon source; thus RocG does not function physiologically to synthesize glutamate, but it is involved in the utilization of arginine, and proline as carbon or nitrogen source. The catabolic RocG is essential for controlling gltAB expression via an inhibitory interactions with the transcriptional regulator GltC in response to the availability of sugars. In Bacillus subtilis (strain 168), this protein is Catabolic NAD-specific glutamate dehydrogenase RocG.